A 208-amino-acid polypeptide reads, in one-letter code: Uracil phosphoribosyltransferase (208 aa).

5-phospho-alpha-D-ribose 1-diphosphate-binding positions include Arg78, Arg103, and 130-138 (DPMLATGGT). Residues Ile193 and 198 to 200 (GDA) each bind uracil. Asp199 is a binding site for 5-phospho-alpha-D-ribose 1-diphosphate.

This sequence belongs to the UPRTase family. It depends on Mg(2+) as a cofactor.

It carries out the reaction UMP + diphosphate = 5-phospho-alpha-D-ribose 1-diphosphate + uracil. The protein operates within pyrimidine metabolism; UMP biosynthesis via salvage pathway; UMP from uracil: step 1/1. With respect to regulation, allosterically activated by GTP. Its function is as follows. Catalyzes the conversion of uracil and 5-phospho-alpha-D-ribose 1-diphosphate (PRPP) to UMP and diphosphate. In Blochmanniella floridana, this protein is Uracil phosphoribosyltransferase.